The primary structure comprises 468 residues: Homocitrate synthase (468 aa).

In terms of domain architecture, Pyruvate carboxyltransferase spans 11-266 (VGILDSTLRE…IEVVDLKKLS (256 aa)). Position 19 (Arg-19) interacts with 2-oxoglutarate. Mg(2+) is bound at residue Glu-20. The 2-oxoglutarate site is built by His-83, Arg-143, and Thr-177. Mg(2+)-binding residues include His-205 and His-207. Residue His-299 is the Proton acceptor of the active site.

The protein belongs to the alpha-IPM synthase/homocitrate synthase family. Homocitrate synthase LYS20/LYS21 subfamily. Mg(2+) is required as a cofactor. The cofactor is Mn(2+).

It carries out the reaction acetyl-CoA + 2-oxoglutarate + H2O = (2R)-homocitrate + CoA + H(+). It participates in amino-acid biosynthesis; L-lysine biosynthesis via AAA pathway; L-alpha-aminoadipate from 2-oxoglutarate: step 1/5. Inhibited by lysine. Its function is as follows. Catalyzes the aldol-type condensation of 2-oxoglutarate with acetyl-CoA to yield homocitrate. Carries out the first step of the alpha-aminoadipate (AAA) lysine biosynthesis pathway. Does not display 2-isopropylmalate synthase and citramalate synthase activities since it cannot use 2-oxoisovalerate or pyruvate as substrate. In Sulfolobus acidocaldarius (strain ATCC 33909 / DSM 639 / JCM 8929 / NBRC 15157 / NCIMB 11770), this protein is Homocitrate synthase.